Here is a 145-residue protein sequence, read N- to C-terminus: 3-dehydroquinate dehydratase (145 aa).

Tyr24 serves as the catalytic Proton acceptor. Asn75, His81, and Asp88 together coordinate substrate. His102 acts as the Proton donor in catalysis. Substrate-binding positions include 103–104 (LS) and Arg113.

The protein belongs to the type-II 3-dehydroquinase family. Homododecamer.

The enzyme catalyses 3-dehydroquinate = 3-dehydroshikimate + H2O. The protein operates within metabolic intermediate biosynthesis; chorismate biosynthesis; chorismate from D-erythrose 4-phosphate and phosphoenolpyruvate: step 3/7. Its function is as follows. Catalyzes a trans-dehydration via an enolate intermediate. This is 3-dehydroquinate dehydratase from Chelativorans sp. (strain BNC1).